The following is a 223-amino-acid chain: Kinetochore protein Spc25 (223 aa).

The stretch at 51–119 forms a coiled coil; it reads RHQRKVGKLQ…NEIMERIQTL (69 aa).

Belongs to the SPC25 family. As to quaternary structure, component of the Ndc80 complex, which is composed of Ndc80, Nuf2 and Spc25.

It is found in the nucleus. The protein resides in the chromosome. It localises to the centromere. Its subcellular location is the kinetochore. Its function is as follows. Acts as a component of the essential kinetochore-associated Ndc80 complex, which is required for chromosome segregation and spindle checkpoint activity during meiosis and mitosis. Required for kinetochore integrity and the organization of stable microtubule binding sites in the outer plate of the kinetochore. Participates in SAC signaling that responds specifically to disruptions in spindle microtubule dynamics. The NDC80 complex synergistically enhances the affinity of the SKA1 complex for microtubules and may allow the NDC80 complex to track depolymerizing microtubules. In Drosophila teissieri (Fruit fly), this protein is Kinetochore protein Spc25.